A 186-amino-acid polypeptide reads, in one-letter code: Hydra actinoporin-like toxin 6 (186 aa).

An N-terminal signal peptide occupies residues 1–21; that stretch reads MLVYVCLVVILIQLPFGAAGG. The Cell attachment site motif lies at 158–160; it reads RAG.

Belongs to the actinoporin family. HALT subfamily. Octamer or nonamer in membranes. Monomer in the soluble state. In vitro, interacts with folate receptor alpha (of target organism). In terms of tissue distribution, expressed female germline during oogenesis.

Its subcellular location is the nematocyst. It localises to the secreted. The protein resides in the target cell membrane. Pore-forming protein that forms hydrophilic pores and causes cytolysis. Compared to equinatoxin-2 (AC P61914), it reveals lower cytolysis activity (5-12-fold difference, tested on erythrocytes), a larger pore size (probably 2-3 nm) and different affinity to membrane lipids (100-fold lower affinity to sphingomyelin). Binds to sulfatides. Shows cytolytic activity on HeLa cells, with a different potency than its paralogs (from most potent to less potent: HALT-4&gt;HALT-6~HALT-1&gt;HALT-3&gt;HALT-7&gt;HALT-2). Pore formation is a multi-step process that involves specific recognition of membrane lipid by a protein aromatic residues rich region, firm binding to the membrane (mainly driven by hydrophobic interactions) accompanied by the transfer of the N-terminal region to the lipid-water interface and finally pore formation after oligomerization of monomers. In vitro, binds to the folate receptor alpha (FOLR1), a GPI-anchored membrane protein that plays a major role in the uptake of folate/folic acid into cells via endocytosis, suggesting a possible involvement of this receptor in the mechanism of HALT-1-induced cell lysis. In vivo, does not cause visible paralysis in larvae of the blowfly Sarcophaga faculata, the most common arthropod prey of Hydra. In Hydra vulgaris (Hydra), this protein is Hydra actinoporin-like toxin 6.